A 192-amino-acid chain; its full sequence is Peptidyl-tRNA hydrolase (192 aa).

Tyr16 provides a ligand contact to tRNA. His21 acts as the Proton acceptor in catalysis. TRNA-binding residues include Tyr66 and Asn68.

The protein belongs to the PTH family. As to quaternary structure, monomer.

It is found in the cytoplasm. It catalyses the reaction an N-acyl-L-alpha-aminoacyl-tRNA + H2O = an N-acyl-L-amino acid + a tRNA + H(+). Its function is as follows. Hydrolyzes ribosome-free peptidyl-tRNAs (with 1 or more amino acids incorporated), which drop off the ribosome during protein synthesis, or as a result of ribosome stalling. In terms of biological role, catalyzes the release of premature peptidyl moieties from peptidyl-tRNA molecules trapped in stalled 50S ribosomal subunits, and thus maintains levels of free tRNAs and 50S ribosomes. The protein is Peptidyl-tRNA hydrolase of Aquifex aeolicus (strain VF5).